The chain runs to 180 residues: Large ribosomal subunit protein uL5 (180 aa).

This sequence belongs to the universal ribosomal protein uL5 family. Part of the 50S ribosomal subunit; part of the 5S rRNA/L5/L18/L25 subcomplex. Contacts the 5S rRNA and the P site tRNA. Forms a bridge to the 30S subunit in the 70S ribosome.

Functionally, this is one of the proteins that bind and probably mediate the attachment of the 5S RNA into the large ribosomal subunit, where it forms part of the central protuberance. In the 70S ribosome it contacts protein S13 of the 30S subunit (bridge B1b), connecting the 2 subunits; this bridge is implicated in subunit movement. Contacts the P site tRNA; the 5S rRNA and some of its associated proteins might help stabilize positioning of ribosome-bound tRNAs. This Rubrobacter xylanophilus (strain DSM 9941 / JCM 11954 / NBRC 16129 / PRD-1) protein is Large ribosomal subunit protein uL5.